The chain runs to 89 residues: Putative regulatory protein RBAM_015500 (89 aa).

This sequence belongs to the RemA family.

This chain is Putative regulatory protein RBAM_015500, found in Bacillus velezensis (strain DSM 23117 / BGSC 10A6 / LMG 26770 / FZB42) (Bacillus amyloliquefaciens subsp. plantarum).